A 514-amino-acid chain; its full sequence is Cytochrome P450 monooxygenase MO6277 (514 aa).

The helical transmembrane segment at leucine 6 to tyrosine 26 threads the bilayer. Cysteine 457 is a binding site for heme.

It belongs to the cytochrome P450 family. Requires heme as cofactor.

The protein resides in the membrane. It catalyses the reaction polyporic acid + reduced [NADPH--hemoprotein reductase] + O2 = ascocorynin + oxidized [NADPH--hemoprotein reductase] + H2O + H(+). Its pathway is secondary metabolite biosynthesis. Functionally, cytochrome P450 monooxygenase that hydroxylates polyporic acid produced by the nonribosomal peptide synthetase acyN to produce the less toxic metabolite ascocorynin. The hydrophobic substrate polyporic acid might approach the active site from the membrane and, after hydroxylation into ascocorynin, leaves into the cytoplasm. MO6277 appears vital to avoid high-level accumulation of polyporic acid in the fungal membrane. The sequence is that of Cytochrome P450 monooxygenase MO6277 from Ascocoryne sarcoides (Purple jellydisc fungus).